The chain runs to 319 residues: Tyrosine--tRNA ligase (319 aa).

Tyrosine 35 contributes to the L-tyrosine binding site. Positions 40-48 (PSGKIHLGH) match the 'HIGH' region motif. L-tyrosine contacts are provided by tyrosine 156, glutamine 160, aspartate 163, and glutamine 178. Residues 213 to 217 (KMSSS) carry the 'KMSKS' region motif. Position 216 (serine 216) interacts with ATP.

Belongs to the class-I aminoacyl-tRNA synthetase family. TyrS type 3 subfamily. In terms of assembly, homodimer.

The protein resides in the cytoplasm. It catalyses the reaction tRNA(Tyr) + L-tyrosine + ATP = L-tyrosyl-tRNA(Tyr) + AMP + diphosphate + H(+). Catalyzes the attachment of tyrosine to tRNA(Tyr) in a two-step reaction: tyrosine is first activated by ATP to form Tyr-AMP and then transferred to the acceptor end of tRNA(Tyr). The sequence is that of Tyrosine--tRNA ligase from Methanobrevibacter smithii (strain ATCC 35061 / DSM 861 / OCM 144 / PS).